Consider the following 142-residue polypeptide: MVLSAADKGNVKTVFGKIGGHAEEYGAETLQRMFQTFPQTKTYFPHFDLQPGSAQIKAHGKKVAAALVEAANHIDDIAGALSKLSDLHAQKLRVDPVNFKFLGHCFLVVLAIHHPSLLTPEVHASMDKFLCAVATVLTAKYR.

In terms of domain architecture, Globin spans 2-142 (VLSAADKGNV…VATVLTAKYR (141 aa)). His59 contacts O2. Position 88 (His88) interacts with heme b.

It belongs to the globin family. Heterotetramer of two alpha chains and two beta chains. As to expression, red blood cells.

Functionally, involved in oxygen transport from the lung to the various peripheral tissues. This is Hemoglobin subunit alpha-A (HBAA) from Anseranas semipalmata (Magpie goose).